The following is a 286-amino-acid chain: 2-hydroxy-6-oxo-6-phenylhexa-2,4-dienoate hydrolase (286 aa).

Substrate-binding positions include 42–43 (GG), Asn51, Asn111, Ser180, and Arg190. The active-site Proton acceptor is His265. A substrate-binding site is contributed by Trp266.

It belongs to the AB hydrolase superfamily. BphD family. Homodimer.

It catalyses the reaction 2,6-dioxo-6-phenylhexa-3-enoate + H2O = 2-oxopent-4-enoate + benzoate + H(+). It participates in xenobiotic degradation; biphenyl degradation; 2-hydroxy-2,4-pentadienoate and benzoate from biphenyl: step 4/4. Its function is as follows. Catalyzes an unusual C-C bond hydrolysis of 2-hydroxy-6-oxo-6-phenylhexa-2,4-dienoic acid (HOPDA) to produce benzoic acid and 2-hydroxy-2,4-pentadienoic acid (HPD). This chain is 2-hydroxy-6-oxo-6-phenylhexa-2,4-dienoate hydrolase (bphD), found in Pseudomonas putida (Arthrobacter siderocapsulatus).